Consider the following 248-residue polypeptide: Pulmonary surfactant-associated protein A2 (248 aa).

Positions methionine 1–cysteine 20 are cleaved as a signal peptide. In terms of domain architecture, Collagen-like spans glycine 28 to proline 100. A 4-hydroxyproline mark is found at proline 30, proline 33, proline 36, proline 42, proline 54, proline 57, proline 63, proline 67, and proline 70. Positions proline 33–alanine 101 are disordered. The segment covering proline 42–lysine 51 has biased composition (basic and acidic residues). The span at proline 54–proline 70 shows a compositional bias: pro residues. Residues glycine 71–proline 82 are compositionally biased toward low complexity. The span at glutamate 84–glutamate 93 shows a compositional bias: basic and acidic residues. Residues methionine 132–phenylalanine 248 form the C-type lectin domain. 2 cysteine pairs are disulfide-bonded: cysteine 155–cysteine 246 and cysteine 224–cysteine 238. N-linked (GlcNAc...) asparagine glycosylation is present at asparagine 207.

It belongs to the SFTPA family. In terms of assembly, oligomeric complex of 6 set of homotrimers. N-acetylated.

The protein resides in the secreted. It localises to the extracellular space. It is found in the extracellular matrix. Its subcellular location is the surface film. In terms of biological role, in presence of calcium ions, it binds to surfactant phospholipids and contributes to lower the surface tension at the air-liquid interface in the alveoli of the mammalian lung and is essential for normal respiration. This is Pulmonary surfactant-associated protein A2 (SFTPA2) from Homo sapiens (Human).